The primary structure comprises 357 residues: NAD-dependent protein deacetylase HST2 (357 aa).

Serine 2 is subject to N-acetylserine. A Deacetylase sirtuin-type domain is found at 5 to 284; the sequence is TASTEMSVRK…EQLVEELGWQ (280 aa). NAD(+)-binding positions include 32-52 and 115-118; these read GAGISTSCGIPDFRSPGTGLY and QNID. Residue histidine 135 is the Proton acceptor of the active site. Residues cysteine 143, cysteine 146, cysteine 170, and cysteine 173 each contribute to the Zn(2+) site. Residues 223–225, 248–250, and serine 270 contribute to the NAD(+) site; these read GTS and NLE. The span at 317–329 shows a compositional bias: basic and acidic residues; sequence LDQSEHESADKKD. The interval 317–357 is disordered; it reads LDQSEHESADKKDKKLQRLNGHDSDEDGASNSSSSQKAAKE. Residue serine 340 is modified to Phosphoserine.

The protein belongs to the sirtuin family. Class I subfamily. Homotrimer. Monomer. Homotrimeric in its unliganded state. Undergoes a trimer-monomer transition upon acetyl-lysine substrate binding. Zn(2+) is required as a cofactor.

It is found in the cytoplasm. The protein resides in the nucleus. The enzyme catalyses N(6)-acetyl-L-lysyl-[protein] + NAD(+) + H2O = 2''-O-acetyl-ADP-D-ribose + nicotinamide + L-lysyl-[protein]. Its activity is regulated as follows. Inhibited by ADP-ribose and nicotinamide. NAD-dependent histone deacetylase that is involved in nuclear silencing events. Derepresses subtelomeric silencing and increases repression in nucleolar (rDNA) silencing. Its function is negatively regulated by active nuclear export. In Saccharomyces cerevisiae (strain ATCC 204508 / S288c) (Baker's yeast), this protein is NAD-dependent protein deacetylase HST2 (HST2).